The following is a 164-amino-acid chain: Phosphopantetheine adenylyltransferase (164 aa).

Thr-10 lines the substrate pocket. ATP contacts are provided by residues Thr-10–Phe-11 and His-18. The substrate site is built by Lys-42, Thr-79, and Arg-93. ATP contacts are provided by residues Gly-94 to Arg-96, Glu-104, and Asn-129 to Arg-135.

Belongs to the bacterial CoaD family. In terms of assembly, homohexamer. Requires Mg(2+) as cofactor.

Its subcellular location is the cytoplasm. The enzyme catalyses (R)-4'-phosphopantetheine + ATP + H(+) = 3'-dephospho-CoA + diphosphate. Its pathway is cofactor biosynthesis; coenzyme A biosynthesis; CoA from (R)-pantothenate: step 4/5. Reversibly transfers an adenylyl group from ATP to 4'-phosphopantetheine, yielding dephospho-CoA (dPCoA) and pyrophosphate. This chain is Phosphopantetheine adenylyltransferase, found in Pelagibacter ubique (strain HTCC1062).